The sequence spans 373 residues: Type 2 DNA topoisomerase 6 subunit A (373 aa).

A Topo IIA-type catalytic domain is found at 15–153; sequence QGDTLAKERL…FHMRPEEDGA (139 aa). Y110 acts as the O-(5'-phospho-DNA)-tyrosine intermediate in catalysis. Mg(2+)-binding residues include E206 and D258.

It belongs to the TOP6A family. As to quaternary structure, homodimer. Heterotetramer of two Top6A and two Top6B chains. Mg(2+) is required as a cofactor.

It carries out the reaction ATP-dependent breakage, passage and rejoining of double-stranded DNA.. Functionally, relaxes both positive and negative superturns and exhibits a strong decatenase activity. In Methanosarcina acetivorans (strain ATCC 35395 / DSM 2834 / JCM 12185 / C2A), this protein is Type 2 DNA topoisomerase 6 subunit A.